We begin with the raw amino-acid sequence, 98 residues long: Beta-elicitin DRE-beta (98 aa).

3 disulfide bridges follow: cysteine 3-cysteine 71, cysteine 27-cysteine 56, and cysteine 51-cysteine 95.

The protein belongs to the elicitin family.

Its subcellular location is the secreted. In terms of biological role, induces local and distal defense responses (incompatible hypersensitive reaction) in plants from the solanaceae and cruciferae families. Elicits leaf necrosis and causes the accumulation of pathogenesis-related proteins. Might interact with the lipidic molecules of the plasma membrane. This is Beta-elicitin DRE-beta from Phytophthora drechsleri.